The following is a 508-amino-acid chain: WD repeat-containing protein DDB_G0290555 (508 aa).

4 WD repeats span residues 32-74, 159-198, 252-292, and 295-334; these read TSEL…LIGE, NVAT…KTYS, FSKH…QVGS, and DSAG…MLHK. The segment at 368–508 is disordered; that stretch reads ENKNRINNDD…KKFAGLKKRK (141 aa). The segment covering 399–435 has biased composition (acidic residues); that stretch reads MDSDDDIEDGDDNDVEFPMEADSDDSDFDLGNSDDDN. Basic and acidic residues predominate over residues 436-446; the sequence is ISVKKENKGDS. Acidic residues predominate over residues 447–456; the sequence is DDSDDDSDED. Residues 471 to 493 show a composition bias toward low complexity; that stretch reads NNNNNNNKGKNNKGKNNSSTKKT. A compositionally biased stretch (basic residues) spans 497 to 508; the sequence is LKKKFAGLKKRK.

The chain is WD repeat-containing protein DDB_G0290555 from Dictyostelium discoideum (Social amoeba).